The sequence spans 436 residues: 3-ketoacyl-CoA thiolase (436 aa).

Cys99 acts as the Acyl-thioester intermediate in catalysis. Residues His392 and Cys422 each act as proton acceptor in the active site.

Belongs to the thiolase-like superfamily. Thiolase family. As to quaternary structure, heterotetramer of two alpha chains (FadJ) and two beta chains (FadI).

It is found in the cytoplasm. It catalyses the reaction an acyl-CoA + acetyl-CoA = a 3-oxoacyl-CoA + CoA. The protein operates within lipid metabolism; fatty acid beta-oxidation. Catalyzes the final step of fatty acid oxidation in which acetyl-CoA is released and the CoA ester of a fatty acid two carbons shorter is formed. This is 3-ketoacyl-CoA thiolase from Shewanella baltica (strain OS155 / ATCC BAA-1091).